The following is a 122-amino-acid chain: MNPRREPRGGRSSLFDGIEEGGIRAASSYSHEINEHENERALEGLQDRVILLKRLSGDINEEVDTHNRMLDRMGNDMDSSRGFLSGTMDRFKTVFETKSSRRMLTLVASFVGLFLVIYYLTR.

The Cytoplasmic portion of the chain corresponds to 1–103 (MNPRREPRGG…VFETKSSRRM (103 aa)). The t-SNARE coiled-coil homology domain maps to 32-94 (EINEHENERA…SGTMDRFKTV (63 aa)). Phosphoserine is present on Ser-56. The helical; Anchor for type IV membrane protein transmembrane segment at 104 to 121 (LTLVASFVGLFLVIYYLT) threads the bilayer. Residue Arg-122 is a topological domain, vesicular.

It belongs to the BET1 family.

The protein localises to the golgi apparatus membrane. It is found in the endoplasmic reticulum membrane. Its function is as follows. Required for vesicular transport from the ER to the Golgi complex. Functions as a SNARE associated with ER-derived vesicles. The polypeptide is Bet1-like SNARE 1-1 (BET11) (Arabidopsis thaliana (Mouse-ear cress)).